The chain runs to 465 residues: FAD-dependent monooxygenase olcE (465 aa).

The helical transmembrane segment at 9–29 (IIIGGSVAGLTLALSLNKIGI) threads the bilayer. Residues glutamate 35, glycine 49, arginine 108, aspartate 308, and alanine 321 each contribute to the FAD site.

Belongs to the paxM FAD-dependent monooxygenase family. The cofactor is FAD.

Its subcellular location is the membrane. It participates in secondary metabolite biosynthesis; terpenoid biosynthesis. Functionally, FAD-dependent monooxygenase; part of the gene cluster that mediates the biosynthesis of 15-deoxyoxalicine B. The first step of the pathway is the synthesis of nicotinyl-CoA from nicotinic acid by the nicotinic acid-CoA ligase olcI. Nicotinyl-CoA is then a substrate of polyketide synthase olcA to produce 4-hydroxy-6-(3-pyridinyl)-2H-pyran-2-one (HPPO) which is further prenylated by the polyprenyl transferase olcH to yield geranylgeranyl-HPPO. Geranylgeranyl pyrophosphate is provided by the cluster-specific geranylgeranyl pyrophosphate synthase olcC. The FAD-dependent monooxygenase olcE catalyzes the epoxidation of geranylgeranyl-HPPO and the terpene cyclase olcD catalyzes the cyclization of the terpenoid component, resulting in the formation of the tricyclic terpene moiety seen in predecaturin E. The cytochrome P450 monooxygenase then catalyzes the allylic oxidation of predecaturin E, which is followed by spirocylization with concomitant loss of one molecule of water to form decaturin E. Decaturin E is the substrate of the cytochrome P450 monooxygenase olcJ which hydroxylates it at the C-29 position to form decaturin F. The short-chain dehydrogenase/reductase olcF may catalyze the oxidation of decaturin F to generate the 29-hydroxyl-27-one intermediate, and subsequent hemiacetal formation probably leads to the formation of decaturin C. The dioxygenase olcK may be a peroxisomal enzyme that catalyzes the hydroxylation of decaturin C into decaturin A once decaturin C is shuttled into the peroxisome by the MFS transporter olcL. Finally the cytochrome P450 monooxygenase olcB catalyzes the oxidative rearrangement to yield 15-deoxyoxalicine B. In the absence of olcJ, decaturin E may be shunted to a pathway in which it is oxidized to a ketone, possibly by olcF, to form decaturin D, which undergoes further allylic oxidation to yield decaturin G. Moreover, in the absence of oclK or oclL, oclB can convert decaturin C into 15-deoxyoxalicine A. In Penicillium canescens, this protein is FAD-dependent monooxygenase olcE.